The sequence spans 439 residues: MKYIYIKTWGCQMNEYDSSMIITLLEKNNQYSLTKSAENADILILNTCSIREKAQEKVFHQLGRWKKIKNNNPKVIIAVGGCVATQEGKEIFKRANYVDIIFGTQTLHRLPKMIDEVEKKRKLSIDISFPKLEKFKYFLAPKKKGYTADISIMEGCNKYCSFCVVPYTRGNEISRPCDDVLFEISLLAKQGIKEINLLGQNVNAYQGPTFNGKVCYFSELIRLVAEIDGIERIRFTTSNPLEFTDDIIEVYKDTPKLVSFLHLPVQSGSNKILNLMKRSYTTEDYTSIIKKLTIARPDIQISSDFIVGFPGESEIDFEKTIEFIKNINFDMSFSFIYSARPGTPASNMNDDLDLKEKKRRLYILQERINIQTMLWSRKMFGSIQSVLVEGVSDKNIMDLYGRTENNRVVTFQGSSKMIGQFVNVKIKKVHTHSLKGELF.

In terms of domain architecture, MTTase N-terminal spans 2–119 (KYIYIKTWGC…LPKMIDEVEK (118 aa)). Cys11, Cys48, Cys82, Cys156, Cys160, and Cys163 together coordinate [4Fe-4S] cluster. One can recognise a Radical SAM core domain in the interval 142-374 (KKKGYTADIS…QERINIQTML (233 aa)). In terms of domain architecture, TRAM spans 377–439 (RKMFGSIQSV…HTHSLKGELF (63 aa)).

It belongs to the methylthiotransferase family. MiaB subfamily. Monomer. The cofactor is [4Fe-4S] cluster.

It is found in the cytoplasm. The enzyme catalyses N(6)-dimethylallyladenosine(37) in tRNA + (sulfur carrier)-SH + AH2 + 2 S-adenosyl-L-methionine = 2-methylsulfanyl-N(6)-dimethylallyladenosine(37) in tRNA + (sulfur carrier)-H + 5'-deoxyadenosine + L-methionine + A + S-adenosyl-L-homocysteine + 2 H(+). Functionally, catalyzes the methylthiolation of N6-(dimethylallyl)adenosine (i(6)A), leading to the formation of 2-methylthio-N6-(dimethylallyl)adenosine (ms(2)i(6)A) at position 37 in tRNAs that read codons beginning with uridine. The polypeptide is tRNA-2-methylthio-N(6)-dimethylallyladenosine synthase (Buchnera aphidicola subsp. Acyrthosiphon pisum (strain APS) (Acyrthosiphon pisum symbiotic bacterium)).